Consider the following 132-residue polypeptide: FPRL1 inhibitory protein (132 aa).

Residues 1-28 (MKKNITKVIIASTVIATGLLTQTNDAKA) form the signal peptide.

Belongs to the CHIPS/FLIPr family.

The protein localises to the secreted. May be involved in countering the first line of host defense mechanisms. Impairs the leukocyte response to FPRL1 agonists by binding directly to host FPRL1. This Staphylococcus aureus (strain MW2) protein is FPRL1 inhibitory protein (flr).